The primary structure comprises 196 residues: Large ribosomal subunit protein eL15 (196 aa).

The disordered stretch occupies residues 159-196 (RAYRGRTSAGQRGRGQQKRGKGTEHTRPSIRANDKRGK). The segment covering 179–196 (KGTEHTRPSIRANDKRGK) has biased composition (basic and acidic residues).

Belongs to the eukaryotic ribosomal protein eL15 family.

The sequence is that of Large ribosomal subunit protein eL15 from Natronomonas pharaonis (strain ATCC 35678 / DSM 2160 / CIP 103997 / JCM 8858 / NBRC 14720 / NCIMB 2260 / Gabara) (Halobacterium pharaonis).